Reading from the N-terminus, the 239-residue chain is uncharacterized protein (239 aa).

The tract at residues 104 to 127 (LPATSQSSQPKSTNSSTESSSIGQ) is disordered. Over residues 107–127 (TSQSSQPKSTNSSTESSSIGQ) the composition is skewed to low complexity. Positions 134–202 (ENEINLNKNK…HFIQNNQESF (69 aa)) form a coiled coil. A helical membrane pass occupies residues 211 to 231 (VKIGSAFIIYIFYNVLFFIIV).

The protein resides in the membrane. This is an uncharacterized protein from Dictyostelium discoideum (Social amoeba).